Reading from the N-terminus, the 234-residue chain is Transcriptional activator protein TraR (234 aa).

The region spanning 167–232 (TAEDAAWLDP…HLTALAIRRK (66 aa)) is the HTH luxR-type domain. The segment at residues 191-210 (MEEIADVEGVKYNSVRVKLR) is a DNA-binding region (H-T-H motif).

The protein belongs to the autoinducer-regulated transcriptional regulatory protein family.

Positive regulation of conjugal transfer of Ti plasmids. TraR activates target genes in the presence of AAI and also activates traR and traI themselves. This Rhizobium radiobacter (Agrobacterium tumefaciens) protein is Transcriptional activator protein TraR (traR).